Reading from the N-terminus, the 471-residue chain is Collagenase 3 (471 aa).

Residues 1 to 19 form the signal peptide; sequence MQPGVLAACLLLSWTHCWS. The propeptide at 20–103 is activation peptide; sequence LPLLNSNEDD…PRCGVPDVGE (84 aa). Residues 94-101 carry the Cysteine switch motif; the sequence is PRCGVPDV. Cys96 lines the Zn(2+) pocket. A glycan (N-linked (GlcNAc...) asparagine) is linked at Asn117. Position 128 (Asp128) interacts with Ca(2+). Residues Asn152 and Asn158 are each glycosylated (N-linked (GlcNAc...) asparagine). Residue Asp162 participates in Ca(2+) binding. Zn(2+) is bound by residues His172 and Asp174. The interaction with TIMP2 stretch occupies residues 176–246; that stretch reads YPFDGPSGLL…GALMFPIYTY (71 aa). 4 residues coordinate Ca(2+): Asp179, Gly180, Ser182, and Leu184. His187 contributes to the Zn(2+) binding site. Ca(2+)-binding residues include Asn194, Gly196, and Asp198. His200 lines the Zn(2+) pocket. The Ca(2+) site is built by Asp202, Asp203, and Glu205. His222 is a Zn(2+) binding site. Glu223 is an active-site residue. 3 residues coordinate Zn(2+): His226, His232, and Met240. The disordered stretch occupies residues 263-284; sequence QSLYGPGDEDPNPKHPKTPDKC. The interaction with collagen stretch occupies residues 268–471; that stretch reads PGDEDPNPKH…VMPTNSLLWC (204 aa). Over residues 273–284 the composition is skewed to basic and acidic residues; it reads PNPKHPKTPDKC. Hemopexin repeat units follow at residues 281 to 330, 331 to 377, 379 to 427, and 428 to 471; these read PDKC…WPEL, PNRI…GFPR, VKKI…FPGI, and GGKV…LLWC. A disulfide bridge links Cys284 with Cys471. Positions 291, 293, 335, and 337 each coordinate Ca(2+). Tyr366 is modified (phosphotyrosine; by PKDCC). Ser383 and Ala385 together coordinate Ca(2+). Asn409 is a glycosylation site (N-linked (GlcNAc...) asparagine). Ca(2+) contacts are provided by Asp432 and Val434.

The protein belongs to the peptidase M10A family. Requires Ca(2+) as cofactor. Zn(2+) serves as cofactor. In terms of processing, the proenzyme is activated by removal of the propeptide; this cleavage can be effected by other matrix metalloproteinases, such as MMP2, MMP3 and MMP14 and may involve several cleavage steps. Cleavage can also be autocatalytic, after partial maturation by another protease or after treatment with 4-aminophenylmercuric acetate (APMA) (in vitro). N-glycosylated. Post-translationally, tyrosine phosphorylated by PKDCC/VLK.

The protein resides in the secreted. It localises to the extracellular space. It is found in the extracellular matrix. Its function is as follows. Plays a role in the degradation of extracellular matrix proteins including fibrillar collagen, fibronectin, TNC and ACAN. Cleaves triple helical collagens, including type I, type II and type III collagen, but has the highest activity with soluble type II collagen. Can also degrade collagen type IV, type XIV and type X. May also function by activating or degrading key regulatory proteins, such as TGFB1 and CCN2. Plays a role in wound healing, tissue remodeling, cartilage degradation, bone development, bone mineralization and ossification. Required for normal embryonic bone development and ossification. Plays a role in the healing of bone fractures via endochondral ossification. Plays a role in wound healing, probably by a mechanism that involves proteolytic activation of TGFB1 and degradation of CCN2. Plays a role in keratinocyte migration during wound healing. May play a role in cell migration and in tumor cell invasion. In Oryctolagus cuniculus (Rabbit), this protein is Collagenase 3 (MMP13).